Reading from the N-terminus, the 669-residue chain is DNA ligase (669 aa).

Residues D34–D38, S83–L84, and E114 each bind NAD(+). The active-site N6-AMP-lysine intermediate is K116. NAD(+) is bound by residues R137, E171, K287, and K311. 4 residues coordinate Zn(2+): C405, C408, C423, and C428. The region spanning N591–K669 is the BRCT domain.

It belongs to the NAD-dependent DNA ligase family. LigA subfamily. Mg(2+) serves as cofactor. It depends on Mn(2+) as a cofactor.

It carries out the reaction NAD(+) + (deoxyribonucleotide)n-3'-hydroxyl + 5'-phospho-(deoxyribonucleotide)m = (deoxyribonucleotide)n+m + AMP + beta-nicotinamide D-nucleotide.. Its function is as follows. DNA ligase that catalyzes the formation of phosphodiester linkages between 5'-phosphoryl and 3'-hydroxyl groups in double-stranded DNA using NAD as a coenzyme and as the energy source for the reaction. It is essential for DNA replication and repair of damaged DNA. The protein is DNA ligase of Bacillus cereus (strain ZK / E33L).